A 616-amino-acid polypeptide reads, in one-letter code: Dihydroxy-acid dehydratase 1 (616 aa).

Mg(2+) is bound at residue Asp-81. Position 122 (Cys-122) interacts with [2Fe-2S] cluster. Mg(2+) is bound by residues Asp-123 and Lys-124. Lys-124 is subject to N6-carboxylysine. Cys-195 contacts [2Fe-2S] cluster. Glu-491 is a Mg(2+) binding site. Ser-517 functions as the Proton acceptor in the catalytic mechanism.

It belongs to the IlvD/Edd family. In terms of assembly, homodimer. The cofactor is [2Fe-2S] cluster. It depends on Mg(2+) as a cofactor.

The catalysed reaction is (2R)-2,3-dihydroxy-3-methylbutanoate = 3-methyl-2-oxobutanoate + H2O. The enzyme catalyses (2R,3R)-2,3-dihydroxy-3-methylpentanoate = (S)-3-methyl-2-oxopentanoate + H2O. It functions in the pathway amino-acid biosynthesis; L-isoleucine biosynthesis; L-isoleucine from 2-oxobutanoate: step 3/4. It participates in amino-acid biosynthesis; L-valine biosynthesis; L-valine from pyruvate: step 3/4. In terms of biological role, functions in the biosynthesis of branched-chain amino acids. Catalyzes the dehydration of (2R,3R)-2,3-dihydroxy-3-methylpentanoate (2,3-dihydroxy-3-methylvalerate) into 2-oxo-3-methylpentanoate (2-oxo-3-methylvalerate) and of (2R)-2,3-dihydroxy-3-methylbutanoate (2,3-dihydroxyisovalerate) into 2-oxo-3-methylbutanoate (2-oxoisovalerate), the penultimate precursor to L-isoleucine and L-valine, respectively. The sequence is that of Dihydroxy-acid dehydratase 1 from Bradyrhizobium diazoefficiens (strain JCM 10833 / BCRC 13528 / IAM 13628 / NBRC 14792 / USDA 110).